A 183-amino-acid polypeptide reads, in one-letter code: NADH-quinone oxidoreductase subunit B 2 (183 aa).

Residues C47, C48, C113, and C142 each coordinate [4Fe-4S] cluster.

This sequence belongs to the complex I 20 kDa subunit family. As to quaternary structure, NDH-1 is composed of 14 different subunits. Subunits NuoB, C, D, E, F, and G constitute the peripheral sector of the complex. [4Fe-4S] cluster serves as cofactor.

The protein resides in the cell inner membrane. It carries out the reaction a quinone + NADH + 5 H(+)(in) = a quinol + NAD(+) + 4 H(+)(out). Functionally, NDH-1 shuttles electrons from NADH, via FMN and iron-sulfur (Fe-S) centers, to quinones in the respiratory chain. The immediate electron acceptor for the enzyme in this species is believed to be ubiquinone. Couples the redox reaction to proton translocation (for every two electrons transferred, four hydrogen ions are translocated across the cytoplasmic membrane), and thus conserves the redox energy in a proton gradient. This Anaeromyxobacter sp. (strain Fw109-5) protein is NADH-quinone oxidoreductase subunit B 2.